A 146-amino-acid polypeptide reads, in one-letter code: Hemoglobin subunit beta (146 aa).

In terms of domain architecture, Globin spans 2–146 (HWTAEEKQLI…VAHALARKYH (145 aa)). Residues histidine 63 and histidine 92 each contribute to the heme b site.

The protein belongs to the globin family. As to quaternary structure, heterotetramer of two alpha chains and two beta chains. As to expression, red blood cells.

Functionally, involved in oxygen transport from the lung to the various peripheral tissues. The sequence is that of Hemoglobin subunit beta (HBB) from Ciconia ciconia (White stork).